A 242-amino-acid chain; its full sequence is Adenosylcobinamide-GDP ribazoletransferase (242 aa).

Helical transmembrane passes span L31 to A51, L52 to S72, I109 to I129, G134 to T154, and I188 to G208.

The protein belongs to the CobS family. Mg(2+) is required as a cofactor.

Its subcellular location is the cell inner membrane. The enzyme catalyses alpha-ribazole + adenosylcob(III)inamide-GDP = adenosylcob(III)alamin + GMP + H(+). The catalysed reaction is alpha-ribazole 5'-phosphate + adenosylcob(III)inamide-GDP = adenosylcob(III)alamin 5'-phosphate + GMP + H(+). Its pathway is cofactor biosynthesis; adenosylcobalamin biosynthesis; adenosylcobalamin from cob(II)yrinate a,c-diamide: step 7/7. Joins adenosylcobinamide-GDP and alpha-ribazole to generate adenosylcobalamin (Ado-cobalamin). Also synthesizes adenosylcobalamin 5'-phosphate from adenosylcobinamide-GDP and alpha-ribazole 5'-phosphate. The polypeptide is Adenosylcobinamide-GDP ribazoletransferase (Pseudomonas fluorescens (strain SBW25)).